The sequence spans 305 residues: Aurasperone B biosynthesis cluster protein A (305 aa).

Positions 1–26 (MSIFFSIRFWPAAISAAILWLPQVLG) are cleaved as a signal peptide. N-linked (GlcNAc...) asparagine glycans are attached at residues Asn29, Asn34, Asn64, Asn83, Asn132, Asn183, Asn218, and Asn288.

This sequence belongs to the bfoA family.

Functionally, part of the gene cluster that mediates the biosynthesis of aurasperone B, a dimeric gamma-naphthopyrone. The first step in the biosynthesis of aurasperone B is the production of gamma-naphthopyrone precursor YWA1 by the non-reducing polyketide synthase albA, via condensation of one acetyl-CoA starter unit with 6 malonyl-CoA units. YWA1 is then methylated by aunE at position C-6 to yield foncesin which is further methylated at position C-8 by aunD to produce fonsecin B. A key enzyme in the biosynthetic pathway is the cytochrome P450 monooxygenase aunB which catalyzes the oxidative dimerization of fonsecin B to aurasperone B. AunB also catalyzes the oxidative dimerization of rubrofusarin B into aurasperone A. This Aspergillus niger (strain ATCC 1015 / CBS 113.46 / FGSC A1144 / LSHB Ac4 / NCTC 3858a / NRRL 328 / USDA 3528.7) protein is Aurasperone B biosynthesis cluster protein A.